Here is a 494-residue protein sequence, read N- to C-terminus: Ribose import ATP-binding protein RbsA (494 aa).

ABC transporter domains follow at residues 2 to 239 (IDMR…VGRQ) and 251 to 493 (IGEE…TGGN). Position 34–41 (34–41 (GENGAGKS)) interacts with ATP.

The protein belongs to the ABC transporter superfamily. Ribose importer (TC 3.A.1.2.1) family. In terms of assembly, the complex is composed of an ATP-binding protein (RbsA), two transmembrane proteins (RbsC) and a solute-binding protein (RbsB).

It is found in the cell membrane. The enzyme catalyses D-ribose(out) + ATP + H2O = D-ribose(in) + ADP + phosphate + H(+). In terms of biological role, part of the ABC transporter complex RbsABC involved in ribose import. Responsible for energy coupling to the transport system. In Geobacillus kaustophilus (strain HTA426), this protein is Ribose import ATP-binding protein RbsA.